A 337-amino-acid chain; its full sequence is Integrase/recombinase (337 aa).

The region spanning 14 to 94 (VKVLDQLRER…ALLFFYGKVL (81 aa)) is the Core-binding (CB) domain. The 217-residue stretch at 112 to 328 (RLPVVLTPDE…GGAGVRSPLD (217 aa)) folds into the Tyr recombinase domain. Active-site residues include arginine 146, lysine 171, histidine 277, arginine 280, and histidine 303. Tyrosine 312 acts as the O-(3'-phospho-DNA)-tyrosine intermediate in catalysis.

Belongs to the 'phage' integrase family.

Putative integrase believed to be involved in the insertion of antibiotic resistance genes into plasmids and transposons. In Escherichia coli, this protein is Integrase/recombinase (int).